A 649-amino-acid chain; its full sequence is Acetyl-coenzyme A synthetase (649 aa).

Residues 189-192, Thr-311, and Asn-335 contribute to the CoA site; that span reads RGGK. Residues 387-389, 411-416, Asp-500, and Arg-515 each bind ATP; these read GEP and DTWWQT. Ser-523 is a binding site for CoA. An ATP-binding site is contributed by Arg-526. Mg(2+) is bound by residues Val-537, His-539, and Val-542. Arg-584 serves as a coordination point for CoA. Residue Lys-609 is modified to N6-acetyllysine.

This sequence belongs to the ATP-dependent AMP-binding enzyme family. Requires Mg(2+) as cofactor. Acetylated. Deacetylation by the SIR2-homolog deacetylase activates the enzyme.

It catalyses the reaction acetate + ATP + CoA = acetyl-CoA + AMP + diphosphate. Catalyzes the conversion of acetate into acetyl-CoA (AcCoA), an essential intermediate at the junction of anabolic and catabolic pathways. AcsA undergoes a two-step reaction. In the first half reaction, AcsA combines acetate with ATP to form acetyl-adenylate (AcAMP) intermediate. In the second half reaction, it can then transfer the acetyl group from AcAMP to the sulfhydryl group of CoA, forming the product AcCoA. The polypeptide is Acetyl-coenzyme A synthetase (Sinorhizobium fredii (strain NBRC 101917 / NGR234)).